A 314-amino-acid chain; its full sequence is tRNA dimethylallyltransferase (314 aa).

An ATP-binding site is contributed by 11–18; sequence GPTASGKT. 13 to 18 provides a ligand contact to substrate; the sequence is TASGKT. 4 interaction with substrate tRNA regions span residues 36–39, 160–164, 241–246, and 274–281; these read DSAL, QRINR, RCVGYR, and KRQITWLR.

This sequence belongs to the IPP transferase family. Monomer. Requires Mg(2+) as cofactor.

The catalysed reaction is adenosine(37) in tRNA + dimethylallyl diphosphate = N(6)-dimethylallyladenosine(37) in tRNA + diphosphate. In terms of biological role, catalyzes the transfer of a dimethylallyl group onto the adenine at position 37 in tRNAs that read codons beginning with uridine, leading to the formation of N6-(dimethylallyl)adenosine (i(6)A). The chain is tRNA dimethylallyltransferase from Glaesserella parasuis serovar 5 (strain SH0165) (Haemophilus parasuis).